Consider the following 189-residue polypeptide: Large ribosomal subunit protein eL18 (189 aa).

Belongs to the eukaryotic ribosomal protein eL18 family.

It localises to the cytoplasm. In Anopheles gambiae (African malaria mosquito), this protein is Large ribosomal subunit protein eL18 (RpL18).